A 471-amino-acid polypeptide reads, in one-letter code: MTAQTLYDKLWNSHVVREEADGTALLYIDRHLVHEVTSPQAFEGLKLAGRRLWRVDSVVSTADHNTPTDHWDQGIQDPISRQQVETLDANIKAFGALAYFPFKDKGQGIVHVMGPEQGATLPGMTVVCGDSHTSTHGAFGALAHGIGTSEVEHVMATQCLVAKKSKNMLVRVDGRLGAGITAKDVALAIIGKIGTAGGTGYAIEFGGEAIRGLSMEGRMTLCNMAIEGGARSGMVAVDDKTIEYVKGRPFAPKGEQWNQAVAYWNTLHSDDGAHFDQVVALDAADIQPQVTWGTSPEMVAEVGGKVPNPANESDPVKKAGIERALAYMGLEADTPIEQIPVDVVFIGSCTNSRIEDLREAAAVAKGRSKAGNVKQVLVVPGSGLVKAQAEAEGLDKIFVAAGFEWREPGCSMCLAMNADRLLPGERCASTSNRNFEGRQGQGGRTHLVSPAMAAAAAVAGRFVDVRRLAAG.

Cys349, Cys410, and Cys413 together coordinate [4Fe-4S] cluster.

It belongs to the aconitase/IPM isomerase family. LeuC type 1 subfamily. Heterodimer of LeuC and LeuD. [4Fe-4S] cluster is required as a cofactor.

The catalysed reaction is (2R,3S)-3-isopropylmalate = (2S)-2-isopropylmalate. It participates in amino-acid biosynthesis; L-leucine biosynthesis; L-leucine from 3-methyl-2-oxobutanoate: step 2/4. Catalyzes the isomerization between 2-isopropylmalate and 3-isopropylmalate, via the formation of 2-isopropylmaleate. The polypeptide is 3-isopropylmalate dehydratase large subunit (Chromobacterium violaceum (strain ATCC 12472 / DSM 30191 / JCM 1249 / CCUG 213 / NBRC 12614 / NCIMB 9131 / NCTC 9757 / MK)).